The chain runs to 397 residues: CCA-adding enzyme (397 aa).

Positions 27 and 30 each coordinate ATP. Positions 27 and 30 each coordinate CTP. D40 and D42 together coordinate Mg(2+). ATP-binding residues include R111, D154, R157, R160, and R163. 5 residues coordinate CTP: R111, D154, R157, R160, and R163.

The protein belongs to the tRNA nucleotidyltransferase/poly(A) polymerase family. Bacterial CCA-adding enzyme type 3 subfamily. In terms of assembly, homodimer. Requires Mg(2+) as cofactor.

The catalysed reaction is a tRNA precursor + 2 CTP + ATP = a tRNA with a 3' CCA end + 3 diphosphate. It carries out the reaction a tRNA with a 3' CCA end + 2 CTP + ATP = a tRNA with a 3' CCACCA end + 3 diphosphate. Catalyzes the addition and repair of the essential 3'-terminal CCA sequence in tRNAs without using a nucleic acid template. Adds these three nucleotides in the order of C, C, and A to the tRNA nucleotide-73, using CTP and ATP as substrates and producing inorganic pyrophosphate. tRNA 3'-terminal CCA addition is required both for tRNA processing and repair. Also involved in tRNA surveillance by mediating tandem CCA addition to generate a CCACCA at the 3' terminus of unstable tRNAs. While stable tRNAs receive only 3'-terminal CCA, unstable tRNAs are marked with CCACCA and rapidly degraded. This chain is CCA-adding enzyme, found in Bacillus licheniformis (strain ATCC 14580 / DSM 13 / JCM 2505 / CCUG 7422 / NBRC 12200 / NCIMB 9375 / NCTC 10341 / NRRL NRS-1264 / Gibson 46).